The following is a 692-amino-acid chain: Elongation factor G (692 aa).

Positions 8–283 (NRIRNIGIAA…AVIDYLPAPT (276 aa)) constitute a tr-type G domain. GTP is bound by residues 17-24 (AHIDAGKT), 81-85 (DTPGH), and 135-138 (NKMD).

Belongs to the TRAFAC class translation factor GTPase superfamily. Classic translation factor GTPase family. EF-G/EF-2 subfamily.

The protein localises to the cytoplasm. In terms of biological role, catalyzes the GTP-dependent ribosomal translocation step during translation elongation. During this step, the ribosome changes from the pre-translocational (PRE) to the post-translocational (POST) state as the newly formed A-site-bound peptidyl-tRNA and P-site-bound deacylated tRNA move to the P and E sites, respectively. Catalyzes the coordinated movement of the two tRNA molecules, the mRNA and conformational changes in the ribosome. This Helicobacter pylori (strain ATCC 700392 / 26695) (Campylobacter pylori) protein is Elongation factor G (fusA).